We begin with the raw amino-acid sequence, 211 residues long: Guanylate kinase (211 aa).

One can recognise a Guanylate kinase-like domain in the interval 5 to 184 (GLLIVFSGPS…AAERVKRIIE (180 aa)). ATP is bound at residue 12–19 (GPSGVGKG).

The protein belongs to the guanylate kinase family.

Its subcellular location is the cytoplasm. It carries out the reaction GMP + ATP = GDP + ADP. In terms of biological role, essential for recycling GMP and indirectly, cGMP. This is Guanylate kinase from Streptococcus pyogenes serotype M1.